A 380-amino-acid chain; its full sequence is Cytochrome b (380 aa).

The next 4 helical transmembrane spans lie at 34-54 (FGSL…FLAM), 78-99 (WLLR…YFHI), 114-134 (WYTG…GYIL), and 179-199 (FFTL…IHLL). Heme b is bound by residues H84 and H98. Residues H183 and H197 each coordinate heme b. H202 provides a ligand contact to a ubiquinone. 4 helical membrane passes run 227–247 (YKDL…TLFL), 289–309 (LGGV…PTLH), 321–341 (FTQI…WIGA), and 348–368 (FIMI…LLIP).

This sequence belongs to the cytochrome b family. The cytochrome bc1 complex contains 3 respiratory subunits (MT-CYB, CYC1 and UQCRFS1), 2 core proteins (UQCRC1 and UQCRC2) and probably 6 low-molecular weight proteins. It depends on heme b as a cofactor.

The protein localises to the mitochondrion inner membrane. Component of the ubiquinol-cytochrome c reductase complex (complex III or cytochrome b-c1 complex) that is part of the mitochondrial respiratory chain. The b-c1 complex mediates electron transfer from ubiquinol to cytochrome c. Contributes to the generation of a proton gradient across the mitochondrial membrane that is then used for ATP synthesis. The polypeptide is Cytochrome b (MT-CYB) (Pelomedusa subrufa (African side-necked turtle)).